We begin with the raw amino-acid sequence, 89 residues long: Small ribosomal subunit protein uS15 (89 aa).

The protein belongs to the universal ribosomal protein uS15 family. As to quaternary structure, part of the 30S ribosomal subunit. Forms a bridge to the 50S subunit in the 70S ribosome, contacting the 23S rRNA.

One of the primary rRNA binding proteins, it binds directly to 16S rRNA where it helps nucleate assembly of the platform of the 30S subunit by binding and bridging several RNA helices of the 16S rRNA. Functionally, forms an intersubunit bridge (bridge B4) with the 23S rRNA of the 50S subunit in the ribosome. This is Small ribosomal subunit protein uS15 from Escherichia coli O139:H28 (strain E24377A / ETEC).